We begin with the raw amino-acid sequence, 210 residues long: Ribosomal RNA small subunit methyltransferase G (210 aa).

S-adenosyl-L-methionine is bound by residues glycine 80, leucine 85, 131–132 (VE), and arginine 146.

This sequence belongs to the methyltransferase superfamily. RNA methyltransferase RsmG family.

It localises to the cytoplasm. It catalyses the reaction guanosine(527) in 16S rRNA + S-adenosyl-L-methionine = N(7)-methylguanosine(527) in 16S rRNA + S-adenosyl-L-homocysteine. Functionally, specifically methylates the N7 position of guanine in position 527 of 16S rRNA. In Pasteurella multocida (strain Pm70), this protein is Ribosomal RNA small subunit methyltransferase G.